The chain runs to 867 residues: V-set and immunoglobulin domain-containing protein 10-like (867 aa).

Positions 1-27 (MDNPQALPLFLLLASLVGILTLRASSG) are cleaved as a signal peptide. The Extracellular segment spans residues 28–776 (LQQTNFSSAF…RAGPTLSHGA (749 aa)). The N-linked (GlcNAc...) asparagine glycan is linked to Asn32. Positions 35–45 (SAFSSDSKSSS) are enriched in low complexity. Residues 35 to 60 (SAFSSDSKSSSQGLGVEVPSIKPPSW) are disordered. 3 N-linked (GlcNAc...) asparagine glycosylation sites follow: Asn88, Asn96, and Asn144. A disordered region spans residues 104 to 186 (LSPVSPFSET…PESKFSAETH (83 aa)). Residues 137–153 (TVKTPASNISTQVSHTK) show a composition bias toward polar residues. Over residues 159–170 (PDSKFSPDDMDL) the composition is skewed to basic and acidic residues. Positions 173-186 (SAQSPESKFSAETH) are enriched in polar residues. Ig-like C2-type domains follow at residues 302–394 (PQLS…ADVS) and 402–487 (PTIT…SLLN). A disulfide bridge connects residues Cys324 and Cys378. Asn423 carries N-linked (GlcNAc...) asparagine glycosylation. An intrachain disulfide couples Cys428 to Cys471. A glycan (N-linked (GlcNAc...) asparagine) is linked at Asn487. Residues 602 to 627 (ASGCPPPSRASWAREGRPLAPGGGSR) are disordered. Asn641 and Asn650 each carry an N-linked (GlcNAc...) asparagine glycan. The helical transmembrane segment at 777-797 (IAGIVLGSLLGLALLAVLLLL) threads the bilayer. Topologically, residues 798 to 867 (CICCLCRFRG…QAQTPVQLSL (70 aa)) are cytoplasmic.

Expressed in the esophagus, particularly in the suprabasilar layers of the epithelium. Expression is largely reduced in esophageal metaplasia, dysplasia, and adenocarcinoma lesions.

It is found in the membrane. The protein is V-set and immunoglobulin domain-containing protein 10-like (VSIG10L) of Homo sapiens (Human).